The sequence spans 380 residues: Crotonobetainyl-CoA reductase (380 aa).

Belongs to the acyl-CoA dehydrogenase family. As to quaternary structure, homotetramer. Requires FAD as cofactor.

Its subcellular location is the cytoplasm. The enzyme catalyses 4-(trimethylamino)butanoyl-CoA + oxidized [electron-transfer flavoprotein] + H(+) = crotonobetainyl-CoA + reduced [electron-transfer flavoprotein]. It functions in the pathway amine and polyamine metabolism; carnitine metabolism. In terms of biological role, catalyzes the reduction of crotonobetainyl-CoA to gamma-butyrobetainyl-CoA. The chain is Crotonobetainyl-CoA reductase from Escherichia coli O6:K15:H31 (strain 536 / UPEC).